A 439-amino-acid polypeptide reads, in one-letter code: Vacuolar zinc transporter COT1 (439 aa).

Residues 1–9 (MKLGSKQVK) lie on the Cytoplasmic side of the membrane. A helical transmembrane segment spans residues 10–30 (IISLLLLDTVFFGIEITTGYL). The Vacuolar portion of the chain corresponds to 31-33 (SHS). Residues 34-54 (LALIADSFHMLNDIISLVVAL) traverse the membrane as a helical segment. Over 55-76 (WAVNVAKNRNPDSTYTYGWKRA) the chain is Cytoplasmic. A helical transmembrane segment spans residues 77 to 97 (EILGALINAVFLIALCVSILI). Over 98 to 113 (EALQRIIAPPVIENPK) the chain is Vacuolar. The chain crosses the membrane as a helical span at residues 114 to 134 (FVLYVGVAGLISNTVGLFLFH). Residues 135 to 244 (DNDQEHGHGH…RKRSLNMHGV (110 aa)) lie on the Cytoplasmic side of the membrane. Short sequence motifs (histidine repeat) lie at residues 140–144 (HGHGH), 165–169 (HTHAH), and 219–223 (SSHTI). A compositionally biased stretch (polar residues) spans 207-230 (PENASKTPSYSTSSHTIASGGNYT). A disordered region spans residues 207 to 231 (PENASKTPSYSTSSHTIASGGNYTE). The residue at position 225 (S225) is a Phosphoserine. Residues 245–265 (FLHVLGDALGNIGVMLSAFFI) form a helical membrane-spanning segment. The Vacuolar portion of the chain corresponds to 266-274 (WKTDYSWKY). A helical transmembrane segment spans residues 275–295 (YTDPLVSLIITGIIFSSALPL). Over 296–439 (SCKASKILLQ…CNTADCLEDH (144 aa)) the chain is Cytoplasmic. Residue K301 forms a Glycyl lysine isopeptide (Lys-Gly) (interchain with G-Cter in ubiquitin) linkage. Residues 388 to 402 (TSTERAGDSQGDHLQ) show a composition bias toward basic and acidic residues. A disordered region spans residues 388 to 408 (TSTERAGDSQGDHLQNDPLSL).

Belongs to the cation diffusion facilitator (CDF) transporter (TC 2.A.4) family. SLC30A subfamily.

It localises to the vacuole membrane. The enzyme catalyses Zn(2+)(in) = Zn(2+)(out). Functionally, vacuolar transporter that regulates zinc homeostasis by mediating zinc transport and storage into the vacuole. Plays a role in resistance to zinc shock resulting from sudden influx of zinc into cytoplasm. May also participate in the regulation of cobalt levels under normal physiological conditions and may be important in the supply of metal that is required for metalloenzyme or cofactor synthesis. Involved in the resistance to cobalt and rhodium ions. This chain is Vacuolar zinc transporter COT1, found in Saccharomyces cerevisiae (strain ATCC 204508 / S288c) (Baker's yeast).